A 227-amino-acid polypeptide reads, in one-letter code: MITKTGTTIVGMKYKTGVILAADTRSTQGPVVSDKNCVKIHQITDKIMCCGAGTAADASRVARMASRELRLFQNKYLRLPLVSHFRKVCTQHLHKYGGGIGAALIVGGIDSEGCHLYEIHPHGSENSALFVSLGSGSLGAIATLESRYRAMDKDEAIDLACDAVKAGILNDLYSGSNIDVCVIDYSGVEFLRNYRRIGVSENTDTLVYPLDSVRIKREEVFDIVEEY.

A propeptide spans 1–6 (MITKTG) (removed in mature form). Residue T7 is the Nucleophile of the active site.

It belongs to the peptidase T1B family. As to quaternary structure, the 26S proteasome consists of a 20S proteasome core and two 19S regulatory subunits. The 20S proteasome core is composed of 28 subunits that are arranged in four stacked rings, resulting in a barrel-shaped structure. The two end rings are each formed by seven alpha subunits, and the two central rings are each formed by seven beta subunits. The catalytic chamber with the active sites is on the inside of the barrel.

It localises to the cytoplasm. The protein resides in the nucleus. The enzyme catalyses Cleavage of peptide bonds with very broad specificity.. Its function is as follows. The proteasome degrades poly-ubiquitinated proteins in the cytoplasm and in the nucleus. It is essential for the regulated turnover of proteins and for the removal of misfolded proteins. The proteasome is a multicatalytic proteinase complex that is characterized by its ability to cleave peptides with Arg, Phe, Tyr, Leu, and Glu adjacent to the leaving group at neutral or slightly basic pH. It has an ATP-dependent proteolytic activity. This is Probable proteasome subunit beta type-2 (PUP1) from Encephalitozoon cuniculi (strain GB-M1) (Microsporidian parasite).